Consider the following 115-residue polypeptide: Rubredoxin (115 aa).

In terms of domain architecture, Rubredoxin-like spans 15–66 (SPNHECRACGYVYIPSQGDQKTSVSPGTPFEALPLNWKCPVCGAPRNYFIST). Cys-20, Cys-23, Cys-53, and Cys-56 together coordinate Fe cation.

This sequence belongs to the rubredoxin family. Fe(3+) serves as cofactor.

Its function is as follows. Rubredoxin is a small nonheme, iron protein lacking acid-labile sulfide. Its single Fe, chelated to 4 Cys, functions as an electron acceptor and may also stabilize the conformation of the molecule. Could be involved in hydrogenase-linked redox processes. This Synechocystis sp. (strain ATCC 27184 / PCC 6803 / Kazusa) protein is Rubredoxin (rub).